Consider the following 173-residue polypeptide: Large ribosomal subunit protein uL10 (173 aa).

Belongs to the universal ribosomal protein uL10 family. As to quaternary structure, part of the ribosomal stalk of the 50S ribosomal subunit. The N-terminus interacts with L11 and the large rRNA to form the base of the stalk. The C-terminus forms an elongated spine to which L12 dimers bind in a sequential fashion forming a multimeric L10(L12)X complex.

Forms part of the ribosomal stalk, playing a central role in the interaction of the ribosome with GTP-bound translation factors. The sequence is that of Large ribosomal subunit protein uL10 from Bifidobacterium adolescentis (strain ATCC 15703 / DSM 20083 / NCTC 11814 / E194a).